The primary structure comprises 156 residues: Glycine cleavage system H protein 2, mitochondrial (156 aa).

Residues 1–23 (MACRLFWASRVASHLRISVAQRG) constitute a mitochondrion transit peptide. The region spanning 47 to 129 (KATFGITDHA…YEQGWIIKVE (83 aa)) is the Lipoyl-binding domain. Residue K88 is modified to N6-lipoyllysine. Residue S131 is modified to Phosphoserine.

The protein belongs to the GcvH family. The glycine cleavage system is composed of four proteins: P, T, L and H. It depends on (R)-lipoate as a cofactor.

Its subcellular location is the mitochondrion. In terms of biological role, the glycine decarboxylase (GDC) or glycine cleavage system catalyzes the degradation of glycine. The H protein shuttles the methylamine group of glycine from the P protein to the T protein. The sequence is that of Glycine cleavage system H protein 2, mitochondrial (GDH2) from Arabidopsis thaliana (Mouse-ear cress).